We begin with the raw amino-acid sequence, 156 residues long: Small ribosomal subunit protein uS7 (156 aa).

It belongs to the universal ribosomal protein uS7 family. In terms of assembly, part of the 30S ribosomal subunit. Contacts proteins S9 and S11.

One of the primary rRNA binding proteins, it binds directly to 16S rRNA where it nucleates assembly of the head domain of the 30S subunit. Is located at the subunit interface close to the decoding center, probably blocks exit of the E-site tRNA. This Nostoc punctiforme (strain ATCC 29133 / PCC 73102) protein is Small ribosomal subunit protein uS7.